The sequence spans 212 residues: ATP phosphoribosyltransferase (212 aa).

It belongs to the ATP phosphoribosyltransferase family. Short subfamily. Heteromultimer composed of HisG and HisZ subunits.

The protein resides in the cytoplasm. It catalyses the reaction 1-(5-phospho-beta-D-ribosyl)-ATP + diphosphate = 5-phospho-alpha-D-ribose 1-diphosphate + ATP. The protein operates within amino-acid biosynthesis; L-histidine biosynthesis; L-histidine from 5-phospho-alpha-D-ribose 1-diphosphate: step 1/9. Functionally, catalyzes the condensation of ATP and 5-phosphoribose 1-diphosphate to form N'-(5'-phosphoribosyl)-ATP (PR-ATP). Has a crucial role in the pathway because the rate of histidine biosynthesis seems to be controlled primarily by regulation of HisG enzymatic activity. The chain is ATP phosphoribosyltransferase from Clostridium botulinum (strain Okra / Type B1).